A 477-amino-acid chain; its full sequence is Aspartyl/glutamyl-tRNA(Asn/Gln) amidotransferase subunit B (477 aa).

It belongs to the GatB/GatE family. GatB subfamily. Heterotrimer of A, B and C subunits.

It carries out the reaction L-glutamyl-tRNA(Gln) + L-glutamine + ATP + H2O = L-glutaminyl-tRNA(Gln) + L-glutamate + ADP + phosphate + H(+). The enzyme catalyses L-aspartyl-tRNA(Asn) + L-glutamine + ATP + H2O = L-asparaginyl-tRNA(Asn) + L-glutamate + ADP + phosphate + 2 H(+). Functionally, allows the formation of correctly charged Asn-tRNA(Asn) or Gln-tRNA(Gln) through the transamidation of misacylated Asp-tRNA(Asn) or Glu-tRNA(Gln) in organisms which lack either or both of asparaginyl-tRNA or glutaminyl-tRNA synthetases. The reaction takes place in the presence of glutamine and ATP through an activated phospho-Asp-tRNA(Asn) or phospho-Glu-tRNA(Gln). In Oenococcus oeni (strain ATCC BAA-331 / PSU-1), this protein is Aspartyl/glutamyl-tRNA(Asn/Gln) amidotransferase subunit B.